The following is an 831-amino-acid chain: Periplasmic nitrate reductase (831 aa).

A signal peptide (tat-type signal) is located at residues 1 to 38 (MSMARRDFIKQTAAAAAATVAGVPLTGYTQNIVTESEA). The region spanning 41-97 (LKWSKAPCRFCGTGCGVNVAVKDNQVVATHGDFNAEVNKGLNCVKGYFLSKIMYGSD) is the 4Fe-4S Mo/W bis-MGD-type domain. [4Fe-4S] cluster is bound by residues Cys48, Cys51, Cys55, and Cys83. Mo-bis(molybdopterin guanine dinucleotide)-binding positions include Lys85, Gln152, Asn177, Cys181, 214–221 (WGSNMAEM), 245–249 (STFEH), 264–266 (QSD), Met375, Gln379, Asn485, 511–512 (SD), Lys534, Asp561, and 721–730 (TGRVLEHWHS). Trp797 lines the substrate pocket. The Mo-bis(molybdopterin guanine dinucleotide) site is built by Asn805 and Lys822.

The protein belongs to the prokaryotic molybdopterin-containing oxidoreductase family. NasA/NapA/NarB subfamily. In terms of assembly, component of the periplasmic nitrate reductase NapAB complex composed of NapA and NapB. Requires [4Fe-4S] cluster as cofactor. Mo-bis(molybdopterin guanine dinucleotide) is required as a cofactor. Post-translationally, predicted to be exported by the Tat system. The position of the signal peptide cleavage has not been experimentally proven.

The protein localises to the periplasm. It catalyses the reaction 2 Fe(II)-[cytochrome] + nitrate + 2 H(+) = 2 Fe(III)-[cytochrome] + nitrite + H2O. Catalytic subunit of the periplasmic nitrate reductase complex NapAB. Receives electrons from NapB and catalyzes the reduction of nitrate to nitrite. This Bordetella parapertussis (strain 12822 / ATCC BAA-587 / NCTC 13253) protein is Periplasmic nitrate reductase.